The primary structure comprises 133 residues: Profilin (133 aa).

This sequence belongs to the profilin family.

Its function is as follows. More likely to influence phosphoinositide metabolism than actin assembly. The sequence is that of Profilin from Cowpox virus (strain GRI-90 / Grishak) (CPV).